The chain runs to 795 residues: Outer membrane protein assembly factor BamA (795 aa).

A signal peptide spans 1-19 (MKKLLIASLLFGTTTTVFA). POTRA domains are found at residues 22 to 89 (FVAK…VVAK), 90 to 170 (SIIS…INED), 173 to 259 (AKLA…VNEG), 262 to 341 (YDLR…VDAG), and 344 to 418 (LTVR…VKER).

The protein belongs to the BamA family. In terms of assembly, part of the Bam complex.

It localises to the cell outer membrane. Part of the outer membrane protein assembly complex, which is involved in assembly and insertion of beta-barrel proteins into the outer membrane. The protein is Outer membrane protein assembly factor BamA of Haemophilus influenzae (strain ATCC 51907 / DSM 11121 / KW20 / Rd).